Here is a 434-residue protein sequence, read N- to C-terminus: ATP-dependent protease ATPase subunit HslU (434 aa).

ATP-binding positions include valine 18, 60 to 65, aspartate 247, glutamate 312, and arginine 384; that span reads GVGKTE.

This sequence belongs to the ClpX chaperone family. HslU subfamily. A double ring-shaped homohexamer of HslV is capped on each side by a ring-shaped HslU homohexamer. The assembly of the HslU/HslV complex is dependent on binding of ATP.

The protein localises to the cytoplasm. In terms of biological role, ATPase subunit of a proteasome-like degradation complex; this subunit has chaperone activity. The binding of ATP and its subsequent hydrolysis by HslU are essential for unfolding of protein substrates subsequently hydrolyzed by HslV. HslU recognizes the N-terminal part of its protein substrates and unfolds these before they are guided to HslV for hydrolysis. The polypeptide is ATP-dependent protease ATPase subunit HslU (Rhodopseudomonas palustris (strain BisB18)).